The chain runs to 124 residues: MRHNNSGRRLGRTTSHRIAMFRNMVTSLLNHERIVTTDAKAKEIRSVAEKMITLGKRGDLHAHRQAAAYIREKSVVTKLFSTIAPRYKDRAGGYTRIIKLGQRLGDAASLSVIELVEEAAPQQS.

It belongs to the bacterial ribosomal protein bL17 family. Part of the 50S ribosomal subunit. Contacts protein L32.

The chain is Large ribosomal subunit protein bL17 from Trichlorobacter lovleyi (strain ATCC BAA-1151 / DSM 17278 / SZ) (Geobacter lovleyi).